We begin with the raw amino-acid sequence, 436 residues long: Tol-Pal system protein TolB (436 aa).

An N-terminal signal peptide occupies residues 1-28; it reads MRSFLKPLLTIAAMALGMTAVIPMPAWA.

The protein belongs to the TolB family. The Tol-Pal system is composed of five core proteins: the inner membrane proteins TolA, TolQ and TolR, the periplasmic protein TolB and the outer membrane protein Pal. They form a network linking the inner and outer membranes and the peptidoglycan layer.

The protein resides in the periplasm. Functionally, part of the Tol-Pal system, which plays a role in outer membrane invagination during cell division and is important for maintaining outer membrane integrity. The sequence is that of Tol-Pal system protein TolB from Mesorhizobium japonicum (strain LMG 29417 / CECT 9101 / MAFF 303099) (Mesorhizobium loti (strain MAFF 303099)).